The chain runs to 509 residues: Transmembrane protein 104 homolog (509 aa).

Topologically, residues 1 to 19 (MPRLVNGREAAPTYSNLVG) are cytoplasmic. A helical transmembrane segment spans residues 20–40 (FIFIFNLIVGTGALTLPGVFA). The Extracellular segment spans residues 41–45 (RAGWM). The helical transmembrane segment at 46–66 (LSLIVIVLLAIISYMTVTFII) threads the bilayer. Residues 67–151 (EAMACANAIR…ATLFFNEFGR (85 aa)) lie on the Cytoplasmic side of the membrane. The helical transmembrane segment at 152–172 (VMFYLCLIVYLYGDLSIYSAA) threads the bilayer. Residues 173-218 (VARSLRDVVCDQTNGTDTNNLMYWPGDFENNTSLACWKEHTISRLN) are Extracellular-facing. Asn-186, Asn-202, and Asn-203 each carry an N-linked (GlcNAc...) asparagine glycan. The helical transmembrane segment at 219-239 (MYRVLLIGFTLIFGPFVYFNV) threads the bilayer. Residues 240–248 (QKTKYLQML) are Cytoplasmic-facing. Residues 249–269 (TAAFRWMAFTLMICISLKLLI) traverse the membrane as a helical segment. Over 270–277 (SRGAKGHP) the chain is Extracellular. A helical membrane pass occupies residues 278–298 (ATFNVYGIPSLFGACVYSFMC). Over 299–320 (HHSLPSLLAPIRHKSMVSKILS) the chain is Cytoplasmic. A helical transmembrane segment spans residues 321-341 (IDYIIICAFYILLAMTGIFAF). Residues 342–361 (ERIEDLYTLDFLPYDVAYVD) are Extracellular-facing. The chain crosses the membrane as a helical span at residues 362-382 (FWSGLLICIDYFLALFPIFTL). Residues 383-411 (STSFPIVAITLKNNLQSLFLDMSQYESYS) are Cytoplasmic-facing. A helical membrane pass occupies residues 412–432 (VILRLCFPLLAIIPPFCITYF). At 433–439 (TESLSSL) the chain is on the extracellular side. The helical transmembrane segment at 440–460 (VAFTGTYAGTGIQYIIPVFLV) threads the bilayer. Over 461–487 (YFARRTCSELLGSGVVNRFKSPFKSSA) the chain is Cytoplasmic. A helical transmembrane segment spans residues 488–508 (WLVFVFIWSILCVCLVSINLF). Residue Ser-509 is a topological domain, extracellular.

This sequence belongs to the TMEM104 family.

It is found in the membrane. This chain is Transmembrane protein 104 homolog, found in Drosophila melanogaster (Fruit fly).